We begin with the raw amino-acid sequence, 464 residues long: Centrosomal protein of 55 kDa (464 aa).

Positions 1–11 (MSSRSTKDLIK) are enriched in basic and acidic residues. A disordered region spans residues 1–26 (MSSRSTKDLIKSKWGSKPSNSKSETT). Coiled coils occupy residues 22–186 (KSET…QWLV), 238–337 (NDLL…FLYT), and 374–403 (QHQLHVILKELRKARNQITQLESLKQLHEF). S96 carries the post-translational modification Phosphoserine. An interaction with TSG101 region spans residues 157–236 (PNCFNSSINN…GYLQEEKQKC (80 aa)). The interaction with PDCD6IP stretch occupies residues 160–214 (FNSSINNIHEMEIQLKDALEKNQQWLVYDQQREVYVKGLLAKIFELEKKTETAAH). Residues 355–464 (QMQACTLDFE…LLVHVEYCSK (110 aa)) are required for localization to the interphase centrosome and to the midbody during cytokinesis. A phosphoserine; by CDK1 and MAPK1 mark is found at S425 and S428. T430 carries the phosphothreonine modification. Phosphoserine; by PLK1 is present on S436.

In terms of assembly, homodimer. Interacts (phosphorylated on Ser-425 and Ser-428) with PLK1; the interaction is indirect via the MTMR3:MTMR4 heterooligomer, occurs during early mitosis, regulates the phosphorylation of CEP55 by PLK1 and its recruitment to the midbody where it can mediate cell abscission. Interacts with AKAP9/CG-NAP; the interaction occurs in interphase and is lost upon mitotic entry. Interacts with PCNT/Kendrin; the interaction occurs in interphase and is lost upon mitotic entry. Directly interacts with PDCD6IP; this interaction is required for PDCD6IP targeting to the midbody; CEP55 binds PDCD6IP in a 2:1 stoichiometry; PDCD6IP competes with TSG101 for the same binding site. Interacts with TSG101; TSG101 competes with PDCD6IP for the same binding site; interaction is required for cytokinesis but not for viral budding. Interacts with MVB12A, VPS37B, VPS37C and VPS28. There is a hierachy of phosphorylation, where both Ser-425 and Ser-428 are phosphorylated at the onset of mitosis, prior to Ser-436. Phosphorylation at Ser-425 and Ser-428 is required for dissociation from the centrosome at the G2/M boundary. Phosphorylation at the 3 sites, Ser-425, Ser-428 and Ser-436, is required for protein function at the final stages of cell division to complete cytokinesis successfully. As to expression, expressed in embryonic brain. Expressed in fetal brain ganglionic eminence, kidney tubules and multinucleate neurons in the temporal cortex. Expressed in adult brain, cerebellum, kidney tubules, intestine and muscles (at protein level). Widely expressed, mostly in proliferative tissues. Highly expressed in testis. Intermediate levels in adult and fetal thymus, as well as in various cancer cell lines. Low levels in different parts of the digestive tract, bone marrow, lymph nodes, placenta, fetal heart and fetal spleen. Hardly detected in brain.

It localises to the cytoplasm. Its subcellular location is the cytoskeleton. The protein resides in the microtubule organizing center. The protein localises to the centrosome. It is found in the centriole. It localises to the cleavage furrow. Its subcellular location is the midbody. The protein resides in the midbody ring. Its function is as follows. Plays a role in mitotic exit and cytokinesis. Recruits PDCD6IP and TSG101 to midbody during cytokinesis. Required for successful completion of cytokinesis. Not required for microtubule nucleation. Plays a role in the development of the brain and kidney. In Homo sapiens (Human), this protein is Centrosomal protein of 55 kDa.